A 57-amino-acid chain; its full sequence is Potassium channel toxin alpha-KTx 8.2 (57 aa).

A signal peptide spans 1–28 (MSRLYAIILIALVFNVVMTITPDMKVEA). Disulfide bonds link cysteine 31/cysteine 47, cysteine 34/cysteine 52, and cysteine 38/cysteine 54.

It belongs to the short scorpion toxin superfamily. Potassium channel inhibitor family. Alpha-KTx 08 subfamily. As to expression, expressed by the venom gland.

It localises to the secreted. In terms of biological role, this toxin inhibits rKv1.1/KCNA1 (100% inhibition at 3 uM), Kv1.3/KCNA3 (human, mouse and rat) (IC(50)=269-467 nM), shaker IR (60% at 3 uM) and activates the mouse capsaicin receptor TRPV1 (EC(50)=132 uM, at 20 degrees Celsius), a non-selective cation channel expressed by sensory neurons of the pain pathway. In vivo, intraplantar injection of this toxin in WT mice hind paw shows significant acute pain, whereas no pain is observed when the toxin is injected into TRPV1 KO mice. In addition, subcutaneous injection into mice (185 mg) produces an excitation of the animal, but no lethality, whereas injection into cockroaches does not provoke lethality as well. This chain is Potassium channel toxin alpha-KTx 8.2, found in Olivierus martensii (Manchurian scorpion).